We begin with the raw amino-acid sequence, 97 residues long: MTDANDTPATPPRESLIEYPSDFPIKVMGKMQDDFAETIVQLVQQFDPEFHTGRMEMRPSSGGNYLGLTVIVRATSREQLDALYRALTAHPMVKVVL.

The protein belongs to the UPF0250 family.

This is UPF0250 protein RSc0326 from Ralstonia nicotianae (strain ATCC BAA-1114 / GMI1000) (Ralstonia solanacearum).